Here is a 508-residue protein sequence, read N- to C-terminus: MPSMLERISKNLVKEIGSKDLTPVKYLLSATKLRQFVILRKKKDSRSSFWEQSDYVPVEFSLNDILEPSSSVLETVVTGPFHFSDIMIQKHKADMGVNVGIEVSVSGEASVDHGCSLEFQIVTIPSPNLEDFQKRKLLDPEPSFLKECRRRGDNLYVVTEAVELINNTVLYDSSSVNILGKIALWITYGKGQGQGESLRVKKKALTLQKGMVMAYKRKQLVIKEKAILISDDDEQRTFQDEYEISEMVGYCAARSEGLLPSFHTISPTLFNASSNDMKLKPELFLTQQFLSGHLPKYEQVHILPVGRIEEPFWQNFKHLQEEVFQKIKTLAQLSKDVQDVMFYSILAMLRDRGALQDLMNMLELDSSGHLDGPGGAILKKLQQDSNHAWFNPKDPILYLLEAIMVLSDFQHDLLACSMEKRILLQQQELVRSILEPNFRYPWSIPFTLKPELLAPLQSEGLAITYGLLEECGLRMELDNPRSTWDVEAKMPLSALYGTLSLLQQLAEA.

The segment at 1–257 (MPSMLERISK…VGYCAARSEG (257 aa)) is triggers pyroptosis.

It belongs to the gasdermin family. As to quaternary structure, homooligomer; homooligomeric ring-shaped pore complex containing 27-28 subunits when inserted in the membrane. Cleavage by CASP8 relieves autoinhibition by releasing the N-terminal moiety (Gasdermin-C, N-terminal) that initiates pyroptosis. The cleavage site is unclear. According to a publication, it takes place after Asp-240 in response to alpha-ketoglutarate. Another paper reports cleavage by CASP8 after Asp-365. In terms of processing, palmitoylated. Expressed mainly in trachea and spleen. In the esophagus, expressed in differentiating cells and probably in differentiated cells. Also detected in gastric epithelium.

The protein localises to the cytoplasm. It localises to the cytosol. It is found in the cell membrane. Its activity is regulated as follows. The full-length protein before cleavage is inactive: intramolecular interactions between N- and C-terminal domains mediate autoinhibition in the absence of activation signal. The intrinsic pyroptosis-inducing activity is carried by the released N-terminal moiety (Gasdermin-C, N-terminal) following cleavage by caspase CASP8. Its function is as follows. This form constitutes the precursor of the pore-forming protein: upon cleavage, the released N-terminal moiety (Gasdermin-C, N-terminal) binds to membranes and forms pores, triggering pyroptosis. In terms of biological role, pore-forming protein that causes membrane permeabilization and pyroptosis. Produced by the cleavage of gasdermin-C by caspase CASP8 in response to death signals. After cleavage, moves to the plasma membrane where it strongly binds to membrane inner leaflet lipids. Homooligomerizes within the membrane and forms pores of 10-15 nanometers (nm) of inner diameter, triggering pyroptosis. The sequence is that of Gasdermin-C from Homo sapiens (Human).